The primary structure comprises 502 residues: Glutamate--tRNA ligase (502 aa).

The short motif at 12-22 (PSPTGYLHVGG) is the 'HIGH' region element. Positions 259-263 (KLSKR) match the 'KMSKS' region motif. Lys262 contacts ATP.

It belongs to the class-I aminoacyl-tRNA synthetase family. Glutamate--tRNA ligase type 1 subfamily. As to quaternary structure, monomer.

Its subcellular location is the cytoplasm. The enzyme catalyses tRNA(Glu) + L-glutamate + ATP = L-glutamyl-tRNA(Glu) + AMP + diphosphate. Catalyzes the attachment of glutamate to tRNA(Glu) in a two-step reaction: glutamate is first activated by ATP to form Glu-AMP and then transferred to the acceptor end of tRNA(Glu). The sequence is that of Glutamate--tRNA ligase from Pelodictyon phaeoclathratiforme (strain DSM 5477 / BU-1).